The following is a 926-amino-acid chain: Alpha-aminoadipic semialdehyde synthase, mitochondrial (926 aa).

A mitochondrion-targeting transit peptide spans 1 to 27; the sequence is MLRVSRTKLGRLSPSLSRGLHHKAVMA. Positions 28 to 455 are lysine-ketoglutarate reductase; sequence LRREDVNAWE…DAVIASNGML (428 aa). Residues Lys48 and Lys56 each carry the N6-acetyllysine modification. Position 93 is an N6-acetyllysine; alternate (Lys93). Position 93 is an N6-succinyllysine; alternate (Lys93). N6-acetyllysine is present on Lys128. An N6-acetyllysine; alternate modification is found at Lys138. The residue at position 138 (Lys138) is an N6-succinyllysine; alternate. An N6-succinyllysine modification is found at Lys274. An N6-acetyllysine; alternate modification is found at Lys286. At Lys286 the chain carries N6-succinyllysine; alternate. The residue at position 333 (Lys333) is an N6-succinyllysine. N6-acetyllysine; alternate is present on Lys458. Position 458 is an N6-succinyllysine; alternate (Lys458). Positions 477 to 926 are saccharopine dehydrogenase; the sequence is MGTKKKVLVL…MYTTQSTIKL (450 aa). NAD(+)-binding residues include Ser488, Asp512, and Gln516. Lys523 and Lys535 each carry N6-acetyllysine; alternate. N6-succinyllysine; alternate is present on residues Lys523 and Lys535. NAD(+)-binding residues include Leu554, Ala576, and Ser577. 577–578 is an L-saccharopine binding site; sequence SY. N6-acetyllysine; alternate is present on Lys584. Position 584 is an N6-succinyllysine; alternate (Lys584). The NAD(+) site is built by Leu603, Asp604, and Pro605. Position 604 (Asp604) interacts with L-saccharopine. Arg703 provides a ligand contact to L-saccharopine. Lys707 carries the post-translational modification N6-acetyllysine. 724–726 lines the L-saccharopine pocket; the sequence is TLR. Position 732 is an N6-succinyllysine (Lys732). Lys739 is modified (N6-acetyllysine). Lys761 is modified (N6-acetyllysine; alternate). Lys761 carries the post-translational modification N6-succinyllysine; alternate. Lys780 carries the post-translational modification N6-acetyllysine.

This sequence in the N-terminal section; belongs to the AlaDH/PNT family. In the C-terminal section; belongs to the saccharopine dehydrogenase family. As to quaternary structure, homotetramer.

The protein localises to the mitochondrion. It carries out the reaction L-saccharopine + NADP(+) + H2O = L-lysine + 2-oxoglutarate + NADPH + H(+). The enzyme catalyses L-saccharopine + NAD(+) + H2O = (S)-2-amino-6-oxohexanoate + L-glutamate + NADH + H(+). The protein operates within amino-acid degradation; L-lysine degradation via saccharopine pathway; glutaryl-CoA from L-lysine: step 1/6. It participates in amino-acid degradation; L-lysine degradation via saccharopine pathway; glutaryl-CoA from L-lysine: step 2/6. Bifunctional enzyme that catalyzes the first two steps in lysine degradation. The polypeptide is Alpha-aminoadipic semialdehyde synthase, mitochondrial (Bos taurus (Bovine)).